The chain runs to 490 residues: MSAKTIMIQGATSDAGKSALATGLCRLLARRGVKVAPFKPQNMALNSAVTADGGEIGRSQAVQAQACGVEPHTDMNPVLLKPNSHTGSQVIIQGRAIGNMEARGYHGYKPVAMKAVLASHARLAAQYQCIVAEGAGSPAEINLRDGDIANMGFAEAVDCPVILVADIERGGVFAHLAGTLALLSESERARVVGLVINRFRGDPSLLKTGVDWLERHTGKPVLGVLPYLYDLHLEAEDSMGLDKPGGAVGGGDKLRVAAPAAPRVSNHTDFDPLRLHPQVEFTLVRAGQAIPPADLIVLPGSKNVLADLAWLRAQGWDEALRRHLRYGGKVLGICGGLQMLGKKLHDPDGLEGEPGSGDGLGWLDMETTLAPEKRLTRMRGRLTLGDAEAAGYEIHMGVSQGPALARPAVRFDDGSADGARSEDDQIFATYLHGVFDEPAACQAILRWAGLKEPEALDYPALREANIDKLADMLERHLDLEPIRRWLPETR.

The GATase cobBQ-type domain maps to 253–440; sequence KLRVAAPAAP…LHGVFDEPAA (188 aa). Cys-334 (nucleophile) is an active-site residue. The active site involves His-432.

It belongs to the CobB/CobQ family. CobQ subfamily.

It functions in the pathway cofactor biosynthesis; adenosylcobalamin biosynthesis. Its function is as follows. Catalyzes amidations at positions B, D, E, and G on adenosylcobyrinic A,C-diamide. NH(2) groups are provided by glutamine, and one molecule of ATP is hydrogenolyzed for each amidation. The sequence is that of Cobyric acid synthase from Chromobacterium violaceum (strain ATCC 12472 / DSM 30191 / JCM 1249 / CCUG 213 / NBRC 12614 / NCIMB 9131 / NCTC 9757 / MK).